Reading from the N-terminus, the 286-residue chain is Acetyl-coenzyme A carboxylase carboxyl transferase subunit beta (286 aa).

The CoA carboxyltransferase N-terminal domain maps to 23 to 286 (IWVKCNNCNQ…ITNKPEPKKE (264 aa)). Zn(2+) is bound by residues C27, C30, C46, and C49. The segment at 27–49 (CNNCNQMIYKIELEKNLEVCPKC) adopts a C4-type zinc-finger fold.

This sequence belongs to the AccD/PCCB family. Acetyl-CoA carboxylase is a heterohexamer composed of biotin carboxyl carrier protein (AccB), biotin carboxylase (AccC) and two subunits each of ACCase subunit alpha (AccA) and ACCase subunit beta (AccD). Requires Zn(2+) as cofactor.

It is found in the cytoplasm. It carries out the reaction N(6)-carboxybiotinyl-L-lysyl-[protein] + acetyl-CoA = N(6)-biotinyl-L-lysyl-[protein] + malonyl-CoA. Its pathway is lipid metabolism; malonyl-CoA biosynthesis; malonyl-CoA from acetyl-CoA: step 1/1. In terms of biological role, component of the acetyl coenzyme A carboxylase (ACC) complex. Biotin carboxylase (BC) catalyzes the carboxylation of biotin on its carrier protein (BCCP) and then the CO(2) group is transferred by the transcarboxylase to acetyl-CoA to form malonyl-CoA. The sequence is that of Acetyl-coenzyme A carboxylase carboxyl transferase subunit beta from Wigglesworthia glossinidia brevipalpis.